Reading from the N-terminus, the 267-residue chain is Transcription factor HES-1-A (267 aa).

The interval 1–43 (MPADVMEKNSSSPVAATPASVSNTPDKPKTASEHRKSSKPIME) is disordered. The span at 10–22 (SSSPVAATPASVS) shows a compositional bias: low complexity. Residues 26 to 35 (DKPKTASEHR) show a composition bias toward basic and acidic residues. Residues 34-91 (HRKSSKPIMEKRRRARINESLGQLKTLILDALKKDSSRHSKLEKADILEMTVKHLRNL) form the bHLH domain. The 34-residue stretch at 110–143 (YRAGFSECMNEVTRFLSTCEGVNTDVRTRLLGHL) folds into the Orange domain. A WRPW motif motif is present at residues 264–267 (WRPW).

In terms of assembly, transcription repression requires formation of a complex with a corepressor protein of the Groucho/TLE family. Interacts with the bHLH protein hes2, and binds DNA in the form of a heterodimer with the bHLH protein hey1/hrt1. Interacts with the bHLH protein hes6; this interaction may inhibit the transcriptional repressor activity. As to expression, starting from late neurula stage, weakly expressed in midline neural cells, where expression is restricted to the superficial layer of the prospective floorplate. Expressed in the posterior somitic mesoderm (PSM) at tailbud stage. During early tailbud stages, broadly expressed within the pronephric mesoderm both around and inside the developing pronephros. During late tailbud to early tadpole stages, expressed more ventrally in the pronephros, and although initially expressed in both the lateral and medial layers, by these later stages expression is predominantly in the lateral layer. Pronephric expression is no longer detectable in late tadpoles (stage 35).

It localises to the nucleus. Its function is as follows. Transcriptional repressor of a subset of early mesodermal genes including myod1 and t/bra. Binds DNA on N-box motifs: 5'-CACNAG-3'. Acts as a negative regulator of myogenesis, mediating Notch signaling to repress expression of myod1. In Xenopus laevis (African clawed frog), this protein is Transcription factor HES-1-A (hes1-a).